The primary structure comprises 211 residues: LexA repressor (211 aa).

Positions Gln27–Asp47 form a DNA-binding region, H-T-H motif. Active-site for autocatalytic cleavage activity residues include Ser131 and Lys168.

The protein belongs to the peptidase S24 family. As to quaternary structure, homodimer.

It carries out the reaction Hydrolysis of Ala-|-Gly bond in repressor LexA.. Functionally, represses a number of genes involved in the response to DNA damage (SOS response), including recA and lexA. In the presence of single-stranded DNA, RecA interacts with LexA causing an autocatalytic cleavage which disrupts the DNA-binding part of LexA, leading to derepression of the SOS regulon and eventually DNA repair. This is LexA repressor from Xylella fastidiosa (strain M12).